The sequence spans 95 residues: Putative regulatory protein Pmob_0099 (95 aa).

It belongs to the RemA family.

This chain is Putative regulatory protein Pmob_0099, found in Petrotoga mobilis (strain DSM 10674 / SJ95).